The sequence spans 125 residues: Putative oxygen-evolving enhancer protein 2-2 (125 aa).

Ser-15 bears the Phosphoserine mark.

It belongs to the PsbP family.

The sequence is that of Putative oxygen-evolving enhancer protein 2-2 (PSBP2) from Arabidopsis thaliana (Mouse-ear cress).